We begin with the raw amino-acid sequence, 351 residues long: UPF0104 membrane protein MTH_887 (351 aa).

The next 8 membrane-spanning stretches (helical) occupy residues 20–40 (IVLS…FAGF), 51–71 (SPYF…LWTL), 137–157 (VFEF…IMTW), 165–185 (IVVS…VYAG), 244–264 (FVIG…RLYV), 275–295 (AVPL…PILP), 304–324 (ILVG…AASV), and 328–348 (IASY…YGKQ).

The protein belongs to the UPF0104 family.

Its subcellular location is the cell membrane. This Methanothermobacter thermautotrophicus (strain ATCC 29096 / DSM 1053 / JCM 10044 / NBRC 100330 / Delta H) (Methanobacterium thermoautotrophicum) protein is UPF0104 membrane protein MTH_887.